Consider the following 298-residue polypeptide: Acetylglutamate kinase (298 aa).

Substrate-binding positions include 69–70 (GG), R91, and N196.

The protein belongs to the acetylglutamate kinase family. ArgB subfamily.

It localises to the cytoplasm. The catalysed reaction is N-acetyl-L-glutamate + ATP = N-acetyl-L-glutamyl 5-phosphate + ADP. It participates in amino-acid biosynthesis; L-arginine biosynthesis; N(2)-acetyl-L-ornithine from L-glutamate: step 2/4. In terms of biological role, catalyzes the ATP-dependent phosphorylation of N-acetyl-L-glutamate. The polypeptide is Acetylglutamate kinase (Rhodopseudomonas palustris (strain BisB18)).